A 636-amino-acid chain; its full sequence is Golgin subfamily A member 8F (636 aa).

Disordered regions lie at residues 1–72 (MAEE…SATL) and 107–127 (NKQVEHQLEEEKKANNEKQKA). Over residues 38–50 (TNGSIHETATSGG) the composition is skewed to polar residues. Coiled coils occupy residues 93 to 148 (VSQL…LNTD), 211 to 263 (LEQS…MSQE), and 306 to 412 (EVEL…QQKQ). The segment covering 109-127 (QVEHQLEEEKKANNEKQKA) has biased composition (basic and acidic residues). Disordered regions lie at residues 344–364 (LREQEERLQEQQERLPEQEER), 422–449 (ALPGEGDGGGHLDSEGEEAPRPIPSIPQ), 496–537 (PITK…GVAA), and 588–612 (PVQGEAREGSPHDNPTAQPIVQDHQ). A compositionally biased stretch (basic and acidic residues) spans 429–441 (GGGHLDSEGEEAP). The span at 509–522 (PGGGHHQAGPGQGG) shows a compositional bias: gly residues.

This sequence belongs to the GOLGA8 family.

The sequence is that of Golgin subfamily A member 8F from Homo sapiens (Human).